A 198-amino-acid polypeptide reads, in one-letter code: SOSS complex subunit B2 (198 aa).

The segment at residues I26–Y89 is a DNA-binding region (OB). The disordered stretch occupies residues E114–R198. Composition is skewed to polar residues over residues S136–P151 and L173–N188.

This sequence belongs to the SOSS-B family. SOSS-B2 subfamily. As to quaternary structure, component of the SOSS complex, composed of SOSS-B (SOSS-B1/NABP2 or SOSS-B2/NABP1), SOSS-A/INTS3 and SOSS-C/INIP. SOSS complexes containing SOSS-B1/NABP2 are more abundant than complexes containing SOSS-B2/NABP1. Ubiquitous with high expression in the thymus.

The protein resides in the nucleus. In terms of biological role, component of the SOSS complex, a multiprotein complex that functions downstream of the MRN complex to promote DNA repair and G2/M checkpoint. In the SOSS complex, acts as a sensor of single-stranded DNA that binds to single-stranded DNA, in particular to polypyrimidines. The SOSS complex associates with DNA lesions and influences diverse endpoints in the cellular DNA damage response including cell-cycle checkpoint activation, recombinational repair and maintenance of genomic stability. Required for efficient homologous recombination-dependent repair of double-strand breaks (DSBs) and ATM-dependent signaling pathways. The polypeptide is SOSS complex subunit B2 (Nabp1) (Mus musculus (Mouse)).